A 1103-amino-acid chain; its full sequence is Activity-dependent neuroprotector homeobox protein (1103 aa).

Glycyl lysine isopeptide (Lys-Gly) (interchain with G-Cter in SUMO2) cross-links involve residues Lys-39 and Lys-72. A C2H2-type 1; degenerate zinc finger spans residues 74–97 (FCCSACPFSSKFFSAYKSHFRNVH). Ser-98 carries the post-translational modification Phosphoserine. The C2H2-type 2; degenerate zinc-finger motif lies at 107–129 (LNCPYCTFNADKKTLETHIKIFH). The segment at 133–154 (SSAPSSSLSTFKDKNKNDGLKP) is disordered. Residues 143-154 (FKDKNKNDGLKP) show a composition bias toward basic and acidic residues. Glycyl lysine isopeptide (Lys-Gly) (interchain with G-Cter in SUMO2) cross-links involve residues Lys-144 and Lys-155. Residues 165–188 (YYCKKCTYRDPLYEIVRKHIYREH) form a C2H2-type 3; degenerate zinc finger. Glycyl lysine isopeptide (Lys-Gly) (interchain with G-Cter in SUMO2) cross-links involve residues Lys-203, Lys-231, Lys-266, Lys-274, Lys-278, Lys-279, Lys-311, and Lys-335. A C2H2-type 4; degenerate zinc finger spans residues 221 to 244 (IHCKRCLFMPKSYEALVQHVIEDH). Arg-348 is modified (asymmetric dimethylarginine). The neuroprotective peptide (NAP) stretch occupies residues 354-361 (NAPVSIPQ). The disordered stretch occupies residues 360 to 439 (PQQSQSVKQL…PAATGPPPSN (80 aa)). Glycyl lysine isopeptide (Lys-Gly) (interchain with G-Cter in SUMO2) cross-links involve residues Lys-367 and Lys-408. Residues 393–423 (SLQTANTSSLPPGQVKSPSVSQSQASRVLGQ) show a composition bias toward polar residues. Phosphoserine occurs at positions 409 and 413. A Glycyl lysine isopeptide (Lys-Gly) (interchain with G-Cter in SUMO2) cross-link involves residue Lys-427. A compositionally biased stretch (pro residues) spans 427–438 (KPPPAATGPPPS). A C2H2-type 5; atypical zinc finger spans residues 447-469 (KICTICNELFPENVYSVHFEKEH). 2 C2H2-type zinc fingers span residues 489-510 (SKCLYCNRYLPTDTLLNHMLIH) and 512-535 (LSCPYCRSTFNDVEKMAAHMRMVH). Residues Lys-600 and Lys-606 each participate in a glycyl lysine isopeptide (Lys-Gly) (interchain with G-Cter in SUMO2) cross-link. Ser-608 carries the phosphoserine modification. Residues Lys-616, Lys-621, Lys-632, and Lys-658 each participate in a glycyl lysine isopeptide (Lys-Gly) (interchain with G-Cter in SUMO2) cross-link. A C2H2-type 8; atypical zinc finger spans residues 622 to 647 (TLCPLCFSILKGPISDALAHHLRERH). The segment at 662–686 (YKCIHCLGVYTSNMTASTITLHLVH) adopts a C2H2-type 9; atypical zinc-finger fold. The tract at residues 691-712 (GKTQNGQDKTNAPSRLNQSPGL) is disordered. Residues 692-710 (KTQNGQDKTNAPSRLNQSP) show a composition bias toward polar residues. A Glycyl lysine isopeptide (Lys-Gly) (interchain with G-Cter in SUMO2) cross-link involves residue Lys-699. The residue at position 709 (Ser-709) is a Phosphoserine. Glycyl lysine isopeptide (Lys-Gly) (interchain with G-Cter in SUMO2) cross-links involve residues Lys-716, Lys-728, and Lys-731. Residue Ser-738 is modified to Phosphoserine. A Glycyl lysine isopeptide (Lys-Gly) (interchain with G-Cter in SUMO2) cross-link involves residue Lys-745. The segment at residues 754-814 (LDPKGHEDDS…SNKRKKCVRD (61 aa)) is a DNA-binding region (homeobox). Ser-805 is subject to Phosphoserine. Glycyl lysine isopeptide (Lys-Gly) (interchain with G-Cter in SUMO2) cross-links involve residues Lys-807, Lys-829, and Lys-835. The segment at 873–1029 (DSFSDSFEHL…VQDDTEQLKW (157 aa)) is disordered. A phosphoserine mark is found at Ser-876, Ser-878, Ser-886, Ser-889, and Ser-905. Glycyl lysine isopeptide (Lys-Gly) (interchain with G-Cter in SUMO2) cross-links involve residues Lys-914, Lys-929, and Lys-936. The span at 922–954 (ESEKLDQKEEEDGSKYETIHLTEERAKLMHDAS) shows a compositional bias: basic and acidic residues. Ser-954 and Ser-956 each carry phosphoserine. Over residues 972–982 (PSESGPGSRQV) the composition is skewed to polar residues. Lys-1017 is covalently cross-linked (Glycyl lysine isopeptide (Lys-Gly) (interchain with G-Cter in SUMO2)). 2 positions are modified to N6-acetyllysine; alternate: Lys-1036 and Lys-1043. Glycyl lysine isopeptide (Lys-Gly) (interchain with G-Cter in SUMO2); alternate cross-links involve residues Lys-1036 and Lys-1043. Positions 1045–1103 (QSQWENASENAERLPNPQIEWQNSTIDSEDGEQFDSMTDGVADPMHGSLTGVKLSSQQA) are disordered. Ser-1072 carries the post-translational modification Phosphoserine.

In terms of assembly, interacts (via N-terminal region) with beta-catenin/CTNNB1 (via the central armadillo domains); interaction is direct and stabilizes CTNNB1 by modulating its phosphorylation by glycogen synthase kinase-3 beta GSK3B.

It is found in the nucleus. It localises to the chromosome. Functionally, may be involved in transcriptional regulation. May mediate some of the neuroprotective peptide VIP-associated effects involving normal growth and cancer proliferation. Positively modulates WNT-beta-catenin/CTNN1B signaling, acting by regulating phosphorylation of, and thereby stabilizing, CTNNB1. May be required for neural induction and neuronal differentiation. May be involved in erythroid differentiation. The polypeptide is Activity-dependent neuroprotector homeobox protein (Adnp) (Rattus norvegicus (Rat)).